A 765-amino-acid chain; its full sequence is Transcription factor SKN7 (765 aa).

Residues 1-42 (MPPTNGEGGSQQPQQQQQQQQQQQQQQQQQQQQQQGGSGSSD) form a disordered region. Residues 11–35 (QQPQQQQQQQQQQQQQQQQQQQQQQ) show a composition bias toward low complexity. Positions 40–145 (SSDFVRKLYK…NLDNIRRKAP (106 aa)) are DNA-binding domain. The stretch at 157–198 (FNASQQQIAALSESLQATQQQLQALQQQCYELEKTNRLLVSE) forms a coiled coil. The tract at residues 160-220 (SQQQIAALSE…QASNEIINHL (61 aa)) is hydrophobic repeat HR-A/B. The disordered stretch occupies residues 371–391 (SSSQITPSQITPPPKDQMSSM). A Response regulatory domain is found at 398–514 (RVLLVEDDKT…NMSRLLRRHL (117 aa)). Asp-449 carries the 4-aspartylphosphate modification. Residues 542 to 765 (TAGPATTGVG…PGVGVAGFVQ (224 aa)) form a transactivation domain region. Gly residues predominate over residues 550-564 (VGVGVAGAPSGGAHG). Disordered stretches follow at residues 550-647 (VGVG…PAGL) and 686-765 (PGAM…GFVQ). Residues 569-584 (AQHQQGYAMAPPTTMQ) show a composition bias toward low complexity. The segment covering 626–636 (QPPPPPTPTQP) has biased composition (pro residues). Composition is skewed to low complexity over residues 637 to 647 (SPTSAAPPAGL) and 699 to 715 (GVGH…AGAR). A compositionally biased stretch (gly residues) spans 755-765 (HPGVGVAGFVQ).

This sequence belongs to the SKN7 family. Homotrimer.

The protein resides in the nucleus. Functionally, transcription factor that is part of a SLN1-YPD1-SKN7 two-component regulatory system, which controls gene expression in response to changes in the osmolarity of the extracellular environment. Under low osmotic conditions, phosphorylated and activated by the phosphorelay intermediate protein YPD1. Also activated in response to oxidative stress, independent on the two-component regulatory system. Regulates heat shock genes in response to oxidative stress and genes involved in cell wall integrity in response to osmotic changes. The sequence is that of Transcription factor SKN7 from Chaetomium thermophilum (strain DSM 1495 / CBS 144.50 / IMI 039719) (Thermochaetoides thermophila).